Consider the following 98-residue polypeptide: ESAT-6-like protein EsxW (98 aa).

This sequence belongs to the WXG100 family. CFP-10 subfamily. In terms of assembly, forms a tight 1:1 complex with EsxV. The complex is destabilized at low pH. Unfolding of the proteins is required for dissociation of the complex and membrane binding.

Its subcellular location is the secreted. The sequence is that of ESAT-6-like protein EsxW from Mycobacterium tuberculosis (strain ATCC 25618 / H37Rv).